Consider the following 758-residue polypeptide: 5-methyltetrahydropteroyltriglutamate--homocysteine methyltransferase (758 aa).

Residues 16–19 and lysine 112 contribute to the 5-methyltetrahydropteroyltri-L-glutamate site; that span reads RELK. L-homocysteine contacts are provided by residues 433 to 435 and glutamate 486; that span reads IGS. Residues 433-435 and glutamate 486 contribute to the L-methionine site; that span reads IGS. 5-methyltetrahydropteroyltri-L-glutamate is bound by residues 517-518 and tryptophan 563; that span reads RC. Residue aspartate 601 participates in L-homocysteine binding. Aspartate 601 contributes to the L-methionine binding site. Glutamate 607 lines the 5-methyltetrahydropteroyltri-L-glutamate pocket. 3 residues coordinate Zn(2+): histidine 643, cysteine 645, and glutamate 667. Residue histidine 696 is the Proton donor of the active site. Cysteine 728 contacts Zn(2+).

Belongs to the vitamin-B12 independent methionine synthase family. Zn(2+) is required as a cofactor.

The catalysed reaction is 5-methyltetrahydropteroyltri-L-glutamate + L-homocysteine = tetrahydropteroyltri-L-glutamate + L-methionine. It participates in amino-acid biosynthesis; L-methionine biosynthesis via de novo pathway; L-methionine from L-homocysteine (MetE route): step 1/1. Its function is as follows. Catalyzes the transfer of a methyl group from 5-methyltetrahydrofolate to homocysteine resulting in methionine formation. The polypeptide is 5-methyltetrahydropteroyltriglutamate--homocysteine methyltransferase (Neisseria meningitidis serogroup C / serotype 2a (strain ATCC 700532 / DSM 15464 / FAM18)).